Reading from the N-terminus, the 90-residue chain is uncharacterized protein (90 aa).

A signal peptide spans 1–20 (MEKLFVLVFALTLLAFSSEA). Positions 31 to 50 (QLLRSRRQDRPSKPGFPDEP) are disordered.

It is found in the secreted. This is an uncharacterized protein from Rattus norvegicus (Rat).